The primary structure comprises 178 residues: ATP synthase subunit delta (178 aa).

The protein belongs to the ATPase delta chain family. F-type ATPases have 2 components, F(1) - the catalytic core - and F(0) - the membrane proton channel. F(1) has five subunits: alpha(3), beta(3), gamma(1), delta(1), epsilon(1). F(0) has three main subunits: a(1), b(2) and c(10-14). The alpha and beta chains form an alternating ring which encloses part of the gamma chain. F(1) is attached to F(0) by a central stalk formed by the gamma and epsilon chains, while a peripheral stalk is formed by the delta and b chains.

It localises to the cell inner membrane. In terms of biological role, f(1)F(0) ATP synthase produces ATP from ADP in the presence of a proton or sodium gradient. F-type ATPases consist of two structural domains, F(1) containing the extramembraneous catalytic core and F(0) containing the membrane proton channel, linked together by a central stalk and a peripheral stalk. During catalysis, ATP synthesis in the catalytic domain of F(1) is coupled via a rotary mechanism of the central stalk subunits to proton translocation. Functionally, this protein is part of the stalk that links CF(0) to CF(1). It either transmits conformational changes from CF(0) to CF(1) or is implicated in proton conduction. This chain is ATP synthase subunit delta, found in Teredinibacter turnerae (strain ATCC 39867 / T7901).